Consider the following 79-residue polypeptide: UPF0150 protein ssr1765 (79 aa).

It belongs to the UPF0150 family.

The sequence is that of UPF0150 protein ssr1765 from Synechocystis sp. (strain ATCC 27184 / PCC 6803 / Kazusa).